Here is a 176-residue protein sequence, read N- to C-terminus: dCTP deaminase (176 aa).

DCTP contacts are provided by residues 99-104 and Asp115; that span reads RSTLAR. The active-site Proton donor/acceptor is the Glu125. Gln163 contacts dCTP.

It belongs to the dCTP deaminase family. In terms of assembly, homotrimer.

It carries out the reaction dCTP + H2O + H(+) = dUTP + NH4(+). The protein operates within pyrimidine metabolism; dUMP biosynthesis; dUMP from dCTP (dUTP route): step 1/2. Functionally, catalyzes the deamination of dCTP to dUTP. The sequence is that of dCTP deaminase from Pyrobaculum calidifontis (strain DSM 21063 / JCM 11548 / VA1).